A 418-amino-acid polypeptide reads, in one-letter code: Ig-like V-type domain-containing protein FAM187A (418 aa).

The signal sequence occupies residues 1–18 (MRLAPTTVLLWAWGSLQA). Residues 19 to 376 (FEIVEKENIF…ASLSDPETRT (358 aa)) are Extracellular-facing. An Ig-like V-type domain is found at 267 to 361 (PWVPQVPIQF…IAGFRLGVTS (95 aa)). A disulfide bond links C289 and C345. N-linked (GlcNAc...) asparagine glycosylation is present at N317. Residues 377–397 (AVELTLIGYLLIAVVFVTIHL) traverse the membrane as a helical segment. Topologically, residues 398–418 (CRCCCQSRCCPNFSAQTLLQL) are cytoplasmic.

Belongs to the FAM187 family.

It is found in the membrane. This Rattus norvegicus (Rat) protein is Ig-like V-type domain-containing protein FAM187A (Fam187a).